The following is a 332-amino-acid chain: MVPTIDMGIPGASSSVAHVPTRRRVLLAEPRGYCAGVDRAVETVERALEKHGPPVYVRHEIVHNRHVVDTLAKAGAVFVEETDQVPEGAIVVFSAHGVAPTVYAAAAERNLQTIDATCPLVTKVHNEARRFARNDYDILLIGHEGHEEVVGTAGEAPEHVQLVDGLDGVERVTIRDEDKVVWLSQTTLSVDETMEIVARLRQRFAKLQDPPSDDICYATQNRQVAVKAMAPECDLVLVVGSRNSSNSVRLVEVALGAGAEAAYLVDWADDIDQSWLQGVTTVGVTSGASVPEVLVRGVLERLAESGYDMVQPVTTANETLVFALPREIRPAR.

Cys-34 is a binding site for [4Fe-4S] cluster. (2E)-4-hydroxy-3-methylbut-2-enyl diphosphate-binding residues include His-63 and His-96. Residues His-63 and His-96 each contribute to the dimethylallyl diphosphate site. Isopentenyl diphosphate-binding residues include His-63 and His-96. Cys-118 lines the [4Fe-4S] cluster pocket. A (2E)-4-hydroxy-3-methylbut-2-enyl diphosphate-binding site is contributed by His-146. His-146 serves as a coordination point for dimethylallyl diphosphate. His-146 contacts isopentenyl diphosphate. Glu-148 serves as the catalytic Proton donor. Residue Thr-186 participates in (2E)-4-hydroxy-3-methylbut-2-enyl diphosphate binding. Cys-216 lines the [4Fe-4S] cluster pocket. Residues Ser-244, Ser-245, Asn-246, and Ser-289 each contribute to the (2E)-4-hydroxy-3-methylbut-2-enyl diphosphate site. Dimethylallyl diphosphate is bound by residues Ser-244, Ser-245, Asn-246, and Ser-289. Isopentenyl diphosphate contacts are provided by Ser-244, Ser-245, Asn-246, and Ser-289.

Belongs to the IspH family. [4Fe-4S] cluster is required as a cofactor.

The enzyme catalyses isopentenyl diphosphate + 2 oxidized [2Fe-2S]-[ferredoxin] + H2O = (2E)-4-hydroxy-3-methylbut-2-enyl diphosphate + 2 reduced [2Fe-2S]-[ferredoxin] + 2 H(+). The catalysed reaction is dimethylallyl diphosphate + 2 oxidized [2Fe-2S]-[ferredoxin] + H2O = (2E)-4-hydroxy-3-methylbut-2-enyl diphosphate + 2 reduced [2Fe-2S]-[ferredoxin] + 2 H(+). It participates in isoprenoid biosynthesis; dimethylallyl diphosphate biosynthesis; dimethylallyl diphosphate from (2E)-4-hydroxy-3-methylbutenyl diphosphate: step 1/1. The protein operates within isoprenoid biosynthesis; isopentenyl diphosphate biosynthesis via DXP pathway; isopentenyl diphosphate from 1-deoxy-D-xylulose 5-phosphate: step 6/6. Catalyzes the conversion of 1-hydroxy-2-methyl-2-(E)-butenyl 4-diphosphate (HMBPP) into a mixture of isopentenyl diphosphate (IPP) and dimethylallyl diphosphate (DMAPP). Acts in the terminal step of the DOXP/MEP pathway for isoprenoid precursor biosynthesis. This chain is 4-hydroxy-3-methylbut-2-enyl diphosphate reductase, found in Mycobacterium ulcerans (strain Agy99).